Reading from the N-terminus, the 82-residue chain is RNA-binding protein Hfq (82 aa).

The region spanning 9 to 68 (DPYLNTLRKERVPVSIYLVNGIKLQGQIESFDQFVILLKNTVSQMVYKTAISTVVPSRPV) is the Sm domain.

The protein belongs to the Hfq family. In terms of assembly, homohexamer.

RNA chaperone that binds small regulatory RNA (sRNAs) and mRNAs to facilitate mRNA translational regulation in response to envelope stress, environmental stress and changes in metabolite concentrations. Also binds with high specificity to tRNAs. The sequence is that of RNA-binding protein Hfq from Pseudomonas aeruginosa.